We begin with the raw amino-acid sequence, 210 residues long: Protein-L-isoaspartate O-methyltransferase (210 aa).

Residue Ser52 is part of the active site.

This sequence belongs to the methyltransferase superfamily. L-isoaspartyl/D-aspartyl protein methyltransferase family.

The protein localises to the cytoplasm. The catalysed reaction is [protein]-L-isoaspartate + S-adenosyl-L-methionine = [protein]-L-isoaspartate alpha-methyl ester + S-adenosyl-L-homocysteine. Catalyzes the methyl esterification of L-isoaspartyl residues in peptides and proteins that result from spontaneous decomposition of normal L-aspartyl and L-asparaginyl residues. It plays a role in the repair and/or degradation of damaged proteins. The sequence is that of Protein-L-isoaspartate O-methyltransferase from Protochlamydia amoebophila (strain UWE25).